An 801-amino-acid polypeptide reads, in one-letter code: PR domain zinc finger protein 4 (801 aa).

In terms of domain architecture, SET spans lysine 412 to serine 529. The segment at histidine 545–histidine 566 adopts a C2H2-type 1; atypical zinc-finger fold. C2H2-type zinc fingers lie at residues histidine 618 to histidine 640, tyrosine 646 to histidine 668, leucine 674 to histidine 696, and isoleucine 702 to histidine 724. The segment at tyrosine 730–cysteine 752 adopts a C2H2-type 6; atypical zinc-finger fold. Positions threonine 751–glutamate 782 are disordered. The span at proline 762–alanine 776 shows a compositional bias: acidic residues.

This sequence belongs to the class V-like SAM-binding methyltransferase superfamily.

Its subcellular location is the nucleus. May function as a transcription factor involved in cell differentiation. This chain is PR domain zinc finger protein 4 (PRDM4), found in Pongo abelii (Sumatran orangutan).